An 80-amino-acid chain; its full sequence is Acyl carrier protein (80 aa).

The 79-residue stretch at 1-79 (MTEEEIFNKI…EAVEYIKSHQ (79 aa)) folds into the Carrier domain. Ser39 is subject to O-(pantetheine 4'-phosphoryl)serine.

The protein belongs to the acyl carrier protein (ACP) family. In terms of processing, 4'-phosphopantetheine is transferred from CoA to a specific serine of apo-ACP by AcpS. This modification is essential for activity because fatty acids are bound in thioester linkage to the sulfhydryl of the prosthetic group.

Its subcellular location is the cytoplasm. It participates in lipid metabolism; fatty acid biosynthesis. Its function is as follows. Carrier of the growing fatty acid chain in fatty acid biosynthesis. The protein is Acyl carrier protein of Lactobacillus johnsonii (strain CNCM I-12250 / La1 / NCC 533).